Here is a 390-residue protein sequence, read N- to C-terminus: L-seryl-tRNA(Sec) selenium transferase (390 aa).

N6-(pyridoxal phosphate)lysine is present on K225.

It belongs to the SelA family. Requires pyridoxal 5'-phosphate as cofactor.

It is found in the cytoplasm. The catalysed reaction is L-seryl-tRNA(Sec) + selenophosphate + H(+) = L-selenocysteinyl-tRNA(Sec) + phosphate. The protein operates within aminoacyl-tRNA biosynthesis; selenocysteinyl-tRNA(Sec) biosynthesis; selenocysteinyl-tRNA(Sec) from L-seryl-tRNA(Sec) (bacterial route): step 1/1. In terms of biological role, converts seryl-tRNA(Sec) to selenocysteinyl-tRNA(Sec) required for selenoprotein biosynthesis. The polypeptide is L-seryl-tRNA(Sec) selenium transferase (Helicobacter pylori (strain P12)).